Reading from the N-terminus, the 358-residue chain is Extracellular phospholipase C (358 aa).

It localises to the secreted. The sequence is that of Extracellular phospholipase C (plcA) from Dickeya chrysanthemi (Pectobacterium chrysanthemi).